The primary structure comprises 358 residues: Phenylalanine--tRNA ligase alpha subunit (358 aa).

Glutamate 258 contacts Mg(2+).

This sequence belongs to the class-II aminoacyl-tRNA synthetase family. Phe-tRNA synthetase alpha subunit type 1 subfamily. Tetramer of two alpha and two beta subunits. Mg(2+) serves as cofactor.

It localises to the cytoplasm. The catalysed reaction is tRNA(Phe) + L-phenylalanine + ATP = L-phenylalanyl-tRNA(Phe) + AMP + diphosphate + H(+). The protein is Phenylalanine--tRNA ligase alpha subunit of Rhodospirillum centenum (strain ATCC 51521 / SW).